Here is a 510-residue protein sequence, read N- to C-terminus: Protein phosphatase EYA3 (510 aa).

Disordered stretches follow at residues 1-32 (MQEP…SNLS) and 175-233 (YQTE…DASS). Residues 7-16 (QTLSQVNNPD) show a composition bias toward polar residues. Low complexity predominate over residues 192–203 (LPSDSSASPPLS). Phosphoserine occurs at positions 199 and 203. The active-site Nucleophile is Asp-246. 2 residues coordinate Mg(2+): Asp-246 and Asp-248. The active-site Proton donor is Asp-248. Ser-375 and Ser-409 each carry phosphoserine. Asp-474 lines the Mg(2+) pocket.

It belongs to the HAD-like hydrolase superfamily. EYA family. In terms of assembly, interacts with SIX1 and DACH1, and probably SIX2, SIX4 and SIX5. Mg(2+) serves as cofactor. Post-translationally, ser-203 phosphorylation is required for localization at sites of DNA damage and directing interaction with H2AX. In terms of tissue distribution, expressed in branchial arches, CNS and developing eye.

The protein localises to the cytoplasm. It is found in the nucleus. The catalysed reaction is O-phospho-L-tyrosyl-[protein] + H2O = L-tyrosyl-[protein] + phosphate. Its function is as follows. Tyrosine phosphatase that specifically dephosphorylates 'Tyr-142' of histone H2AX (H2AXY142ph). 'Tyr-142' phosphorylation of histone H2AX plays a central role in DNA repair and acts as a mark that distinguishes between apoptotic and repair responses to genotoxic stress. Promotes efficient DNA repair by dephosphorylating H2AX, promoting the recruitment of DNA repair complexes containing MDC1. Its function as histone phosphatase probably explains its role in transcription regulation during organogenesis. The phosphatase activity has been shown in vitro. Coactivates SIX1. Seems to coactivate SIX2, SIX4 and SIX5. The repression of precursor cell proliferation in myoblasts by SIX1 is switched to activation through recruitment of EYA3 to the SIX1-DACH1 complex and seems to be dependent on EYA3 phosphatase activity. May be involved in development of the eye. May play a role in mediating the induction and differentiation of cranial placodes. In Mus musculus (Mouse), this protein is Protein phosphatase EYA3 (Eya3).